The sequence spans 83 residues: RNA-binding protein Hfq (83 aa).

One can recognise a Sm domain in the interval 9-68 (DPYLNILRKERIPVSIFLVNGIKLQGQIESFDQFVILLRNTVSQMVYKHAISTVVPSRNV).

The protein belongs to the Hfq family. Homohexamer.

Functionally, RNA chaperone that binds small regulatory RNA (sRNAs) and mRNAs to facilitate mRNA translational regulation in response to envelope stress, environmental stress and changes in metabolite concentrations. Also binds with high specificity to tRNAs. The polypeptide is RNA-binding protein Hfq (Chromohalobacter salexigens (strain ATCC BAA-138 / DSM 3043 / CIP 106854 / NCIMB 13768 / 1H11)).